The following is a 441-amino-acid chain: tRNA modification GTPase MnmE (441 aa).

3 residues coordinate (6S)-5-formyl-5,6,7,8-tetrahydrofolate: Arg23, Glu81, and Arg121. The region spanning 219–366 (GFTVVLAGAP…LLDAIQAAAE (148 aa)) is the TrmE-type G domain. Residues 229-234 (NSGKST), 248-254 (SDSPGTT), and 273-276 (DTAG) each bind GTP. Residues Ser233 and Thr254 each coordinate Mg(2+). Position 441 (Lys441) interacts with (6S)-5-formyl-5,6,7,8-tetrahydrofolate.

This sequence belongs to the TRAFAC class TrmE-Era-EngA-EngB-Septin-like GTPase superfamily. TrmE GTPase family. As to quaternary structure, homodimer. Heterotetramer of two MnmE and two MnmG subunits. K(+) is required as a cofactor.

The protein localises to the cytoplasm. In terms of biological role, exhibits a very high intrinsic GTPase hydrolysis rate. Involved in the addition of a carboxymethylaminomethyl (cmnm) group at the wobble position (U34) of certain tRNAs, forming tRNA-cmnm(5)s(2)U34. The chain is tRNA modification GTPase MnmE from Methylobacterium radiotolerans (strain ATCC 27329 / DSM 1819 / JCM 2831 / NBRC 15690 / NCIMB 10815 / 0-1).